A 173-amino-acid chain; its full sequence is C-phycocyanin beta subunit (173 aa).

Asn73 carries the post-translational modification N4-methylasparagine. Residues Cys83 and Cys154 each coordinate (2R,3E)-phycocyanobilin.

Belongs to the phycobiliprotein family. Heterodimer of an alpha and a beta subunit. Part of 2 PBS rod complexes, the conventional PBS rod and a photosystem I-specific CpcL-PBS rod. In terms of processing, contains two covalently linked bilin chromophores.

The protein resides in the cellular thylakoid membrane. Functionally, light-harvesting photosynthetic bile pigment-protein from the phycobiliprotein complex (phycobilisome, PBS). Phycocyanin is the major phycobiliprotein in the PBS rod. In Nostoc sp. (strain PCC 7120 / SAG 25.82 / UTEX 2576), this protein is C-phycocyanin beta subunit (cpcB).